The sequence spans 235 residues: MTDHDNQRWLQLWRERRTDFHQHGVNLLLSRFWPAFAPATPSRVFVPLCGKSLDMLWLAEQGHDVIGVELSPLAIEAFFRENHLPPSKRRQGRFTLWRHGRIGILCGDYFALSEADLGPVDSVYDRAALTALPPILRSRYVAQLRRIVPDTARVFLLTLEDAEADATLQQALGVDEELAALYTAGFEIALAHVESLFEPDPQNGAPRRVEHKVYQLTGKRPASPEADGRAAETED.

Residues W13, L48, E69, and R126 each contribute to the S-adenosyl-L-methionine site. The tract at residues 199–235 (PDPQNGAPRRVEHKVYQLTGKRPASPEADGRAAETED) is disordered. Residues 226–235 (ADGRAAETED) are compositionally biased toward basic and acidic residues.

The protein belongs to the class I-like SAM-binding methyltransferase superfamily. TPMT family.

The protein resides in the cytoplasm. The enzyme catalyses S-adenosyl-L-methionine + a thiopurine = S-adenosyl-L-homocysteine + a thiopurine S-methylether.. The chain is Thiopurine S-methyltransferase from Stutzerimonas stutzeri (strain A1501) (Pseudomonas stutzeri).